A 264-amino-acid chain; its full sequence is 4-hydroxy-tetrahydrodipicolinate reductase (264 aa).

Position 8 to 13 (8 to 13 (GPRGNM)) interacts with NAD(+). Residue Lys36 coordinates NADP(+). NAD(+)-binding positions include 97–99 (GTT) and 123–126 (APNF). Catalysis depends on His153, which acts as the Proton donor/acceptor. Residue His154 participates in (S)-2,3,4,5-tetrahydrodipicolinate binding. Residue Lys157 is the Proton donor of the active site. Position 163 to 164 (163 to 164 (GT)) interacts with (S)-2,3,4,5-tetrahydrodipicolinate.

The protein belongs to the DapB family.

Its subcellular location is the cytoplasm. The enzyme catalyses (S)-2,3,4,5-tetrahydrodipicolinate + NAD(+) + H2O = (2S,4S)-4-hydroxy-2,3,4,5-tetrahydrodipicolinate + NADH + H(+). It catalyses the reaction (S)-2,3,4,5-tetrahydrodipicolinate + NADP(+) + H2O = (2S,4S)-4-hydroxy-2,3,4,5-tetrahydrodipicolinate + NADPH + H(+). It functions in the pathway amino-acid biosynthesis; L-lysine biosynthesis via DAP pathway; (S)-tetrahydrodipicolinate from L-aspartate: step 4/4. In terms of biological role, catalyzes the conversion of 4-hydroxy-tetrahydrodipicolinate (HTPA) to tetrahydrodipicolinate. This chain is 4-hydroxy-tetrahydrodipicolinate reductase, found in Shouchella clausii (strain KSM-K16) (Alkalihalobacillus clausii).